The sequence spans 812 residues: Probable phosphoketolase (812 aa).

The protein belongs to the XFP family. Thiamine diphosphate serves as cofactor.

This is Probable phosphoketolase from Thermosynechococcus vestitus (strain NIES-2133 / IAM M-273 / BP-1).